A 295-amino-acid polypeptide reads, in one-letter code: Diaminopimelate epimerase (295 aa).

Substrate is bound by residues asparagine 13 and asparagine 69. Cysteine 78 functions as the Proton donor in the catalytic mechanism. Substrate-binding positions include 79-80, asparagine 173, asparagine 212, and 230-231; these read GN and ER. The active-site Proton acceptor is the cysteine 239. Residue 240–241 participates in substrate binding; the sequence is GT.

This sequence belongs to the diaminopimelate epimerase family. In terms of assembly, homodimer.

The protein localises to the cytoplasm. It catalyses the reaction (2S,6S)-2,6-diaminopimelate = meso-2,6-diaminopimelate. It functions in the pathway amino-acid biosynthesis; L-lysine biosynthesis via DAP pathway; DL-2,6-diaminopimelate from LL-2,6-diaminopimelate: step 1/1. Functionally, catalyzes the stereoinversion of LL-2,6-diaminopimelate (L,L-DAP) to meso-diaminopimelate (meso-DAP), a precursor of L-lysine. This is Diaminopimelate epimerase from Methanococcus aeolicus (strain ATCC BAA-1280 / DSM 17508 / OCM 812 / Nankai-3).